Consider the following 265-residue polypeptide: Probable protein VP2 (265 aa).

Disordered regions lie at residues 44 to 110, 152 to 171, and 194 to 265; these read RLGR…DDLS, STRS…SDVA, and VQNA…CSSN. Pro residues predominate over residues 48-60; it reads PQPPRPPGGPPGP. A compositionally biased stretch (low complexity) spans 152-168; it reads STRSTSTRASRSTDGTS. Positions 221–242 are enriched in basic residues; that stretch reads GKTRPRKKPRAKQKPKKRRRYR. The span at 243 to 265 shows a compositional bias: low complexity; sequence SSSNSSSKSNDSSDAESSTCSSN.

Phosphorylated at C-terminal serines.

The chain is Probable protein VP2 from Torque teno virus (isolate Human/Germany/KAV/2001) (TTV).